A 431-amino-acid polypeptide reads, in one-letter code: MRPEERWNHVGLVQREEADSVLEEPINVDEEDGGLQICRVCGDKANGYHFNVMTCEGCKGFFRRAMKRNVRLRCPFRKGTCEITRKTRRQCQACRLRKCLESGMKKEMIMSDAAVEQRRALIKRKKREKIEAPPPGGQGLTEEQQALIQELMDAQMQTFDTTFSHFKDFRLPAVFHSDCELPEVLQASLLEDPATWSQIMKDSVPMKISVQLRGEDGSIWNYQPPSKSDGKEIIPLLPHLADVSTYMFKGVINFAKVISHFRELPIEDQISLLKGATFEMCILRFNTMFDTETGTWECGRLAYCFEDPNGGFQKLLLDPLMKFHCMLKKLQLREEEYVLMQAISLFSPDRPGVVQRSVVDQLQERFALTLKAYIECSRPYPAHRFLFLKIMAVLTELRSINAQQTQQLLRIQDTHPFATPLMQELFSSTDG.

2 consecutive NR C4-type zinc fingers follow at residues 38-58 and 74-99; these read CRVC…CEGC and CPFR…LRKC. The segment at residues 38–104 is a DNA-binding region (nuclear receptor); sequence CRVCGDKANG…RLRKCLESGM (67 aa). The Bipartite nuclear localization signal motif lies at 63 to 89; the sequence is RRAMKRNVRLRCPFRKGTCEITRKTRR. The tract at residues 105–142 is hinge; it reads KKEMIMSDAAVEQRRALIKRKKREKIEAPPPGGQGLTE. Residues 143–430 form the NR LBD domain; the sequence is EQQALIQELM…LMQELFSSTD (288 aa). Hyperforin contacts are provided by residues Ser244 and 282 to 285; that span reads ILRF.

Belongs to the nuclear hormone receptor family. NR1 subfamily. Heterodimer with RXRA. Interacts with NCOA1. Interacts (via domain NR LBD) with CRY1 and CRY2 in a ligand-dependent manner.

Its subcellular location is the nucleus. Its function is as follows. Nuclear receptor that binds and is activated by a variety of endogenous and xenobiotic compounds. Transcription factor that activates the transcription of multiple genes involved in the metabolism and secretion of potentially harmful xenobiotics, endogenous compounds and drugs. Response to specific ligands is species-specific, due to differences in the ligand-binding domain. Activated by naturally occurring steroids, such as pregnenolone and progesterone. Binds to a response element in the promoters of the CYP3A4 and ABCB1/MDR1 genes. The protein is Nuclear receptor subfamily 1 group I member 2 (Nr1i2) of Rattus norvegicus (Rat).